The following is a 141-amino-acid chain: Large ribosomal subunit protein bL17 (141 aa).

This sequence belongs to the bacterial ribosomal protein bL17 family. Part of the 50S ribosomal subunit. Contacts protein L32.

The protein is Large ribosomal subunit protein bL17 of Bartonella bacilliformis (strain ATCC 35685 / KC583 / Herrer 020/F12,63).